Consider the following 315-residue polypeptide: Methionyl-tRNA formyltransferase (315 aa).

113 to 116 (SLLP) contributes to the (6S)-5,6,7,8-tetrahydrofolate binding site.

The protein belongs to the Fmt family.

It catalyses the reaction L-methionyl-tRNA(fMet) + (6R)-10-formyltetrahydrofolate = N-formyl-L-methionyl-tRNA(fMet) + (6S)-5,6,7,8-tetrahydrofolate + H(+). In terms of biological role, attaches a formyl group to the free amino group of methionyl-tRNA(fMet). The formyl group appears to play a dual role in the initiator identity of N-formylmethionyl-tRNA by promoting its recognition by IF2 and preventing the misappropriation of this tRNA by the elongation apparatus. The polypeptide is Methionyl-tRNA formyltransferase (Escherichia coli O17:K52:H18 (strain UMN026 / ExPEC)).